The chain runs to 316 residues: Thymidylate synthase (316 aa).

DUMP is bound by residues R23 and 178-179 (RR). The Nucleophile role is filled by C198. Residues 218–221 (RSGD), N229, and 259–261 (HIY) each bind dUMP. Residue D221 coordinates (6R)-5,10-methylene-5,6,7,8-tetrahydrofolate. A315 contributes to the (6R)-5,10-methylene-5,6,7,8-tetrahydrofolate binding site.

The protein belongs to the thymidylate synthase family. Bacterial-type ThyA subfamily. As to quaternary structure, homodimer.

The protein localises to the cytoplasm. The catalysed reaction is dUMP + (6R)-5,10-methylene-5,6,7,8-tetrahydrofolate = 7,8-dihydrofolate + dTMP. It participates in pyrimidine metabolism; dTTP biosynthesis. Catalyzes the reductive methylation of 2'-deoxyuridine-5'-monophosphate (dUMP) to 2'-deoxythymidine-5'-monophosphate (dTMP) while utilizing 5,10-methylenetetrahydrofolate (mTHF) as the methyl donor and reductant in the reaction, yielding dihydrofolate (DHF) as a by-product. This enzymatic reaction provides an intracellular de novo source of dTMP, an essential precursor for DNA biosynthesis. The chain is Thymidylate synthase from Latilactobacillus sakei subsp. sakei (strain 23K) (Lactobacillus sakei subsp. sakei).